The sequence spans 404 residues: Cysteine desulfurase IscS (404 aa).

Pyridoxal 5'-phosphate is bound by residues 75 to 76 (AT), Asn155, Gln183, and 203 to 205 (SAH). At Lys206 the chain carries N6-(pyridoxal phosphate)lysine. Residue Thr243 coordinates pyridoxal 5'-phosphate. Catalysis depends on Cys328, which acts as the Cysteine persulfide intermediate. Cys328 provides a ligand contact to [2Fe-2S] cluster.

It belongs to the class-V pyridoxal-phosphate-dependent aminotransferase family. NifS/IscS subfamily. Homodimer. Forms a heterotetramer with IscU, interacts with other sulfur acceptors. The cofactor is pyridoxal 5'-phosphate.

The protein resides in the cytoplasm. The enzyme catalyses (sulfur carrier)-H + L-cysteine = (sulfur carrier)-SH + L-alanine. The protein operates within cofactor biosynthesis; iron-sulfur cluster biosynthesis. In terms of biological role, master enzyme that delivers sulfur to a number of partners involved in Fe-S cluster assembly, tRNA modification or cofactor biosynthesis. Catalyzes the removal of elemental sulfur atoms from cysteine to produce alanine. Functions as a sulfur delivery protein for Fe-S cluster synthesis onto IscU, an Fe-S scaffold assembly protein, as well as other S acceptor proteins. The sequence is that of Cysteine desulfurase IscS from Aeromonas salmonicida (strain A449).